We begin with the raw amino-acid sequence, 528 residues long: Capsule biosynthesis protein CapD proenzyme (528 aa).

Positions 1–26 (MNSFKWGKKIILFCLIVSLMGGIGVS) are cleaved as a signal peptide. The active-site Nucleophile is the Thr352. Poly-gamma-D-glutamate is bound by residues Thr352, 429-432 (GGNR), and Arg520.

This sequence belongs to the gamma-glutamyltransferase family. This enzyme consists of two polypeptide chains, which are synthesized in precursor form from a single polypeptide. Cleaved by autocatalysis into a large and a small subunit.

The protein operates within capsule biogenesis; capsule polysaccharide biosynthesis. Functionally, transpeptidase that cleaves the poly-gamma-D-glutamate capsule and catalyzes the formation of an amide bond with the side-chain amino group of meso-diaminopimelic acid (m-DAP) in the peptidoglycan scaffold. Degradation of the high-molecular weight capsule (H-capsule) to the lower-molecular weight capsule (L-capsule), which is released from the bacterial cell surface. The production of L-capsule is essential to mediate escape from host defenses. This chain is Capsule biosynthesis protein CapD proenzyme (capD), found in Bacillus anthracis.